A 25-amino-acid chain; its full sequence is MDSKAVLKGMLEKAYRIEAGFEKRG.

This is an uncharacterized protein from Archaeoglobus fulgidus (strain ATCC 49558 / DSM 4304 / JCM 9628 / NBRC 100126 / VC-16).